Here is a 264-residue protein sequence, read N- to C-terminus: Thymidylate synthase (264 aa).

Arg-21 lines the dUMP pocket. Residue His-51 coordinates (6R)-5,10-methylene-5,6,7,8-tetrahydrofolate. 126–127 contacts dUMP; sequence RR. The Nucleophile role is filled by Cys-146. Residues 166 to 169, Asn-177, and 207 to 209 each bind dUMP; these read RSCD and HLY. Position 169 (Asp-169) interacts with (6R)-5,10-methylene-5,6,7,8-tetrahydrofolate. (6R)-5,10-methylene-5,6,7,8-tetrahydrofolate is bound at residue Ala-263.

It belongs to the thymidylate synthase family. Bacterial-type ThyA subfamily. Homodimer.

It is found in the cytoplasm. It catalyses the reaction dUMP + (6R)-5,10-methylene-5,6,7,8-tetrahydrofolate = 7,8-dihydrofolate + dTMP. It participates in pyrimidine metabolism; dTTP biosynthesis. Functionally, catalyzes the reductive methylation of 2'-deoxyuridine-5'-monophosphate (dUMP) to 2'-deoxythymidine-5'-monophosphate (dTMP) while utilizing 5,10-methylenetetrahydrofolate (mTHF) as the methyl donor and reductant in the reaction, yielding dihydrofolate (DHF) as a by-product. This enzymatic reaction provides an intracellular de novo source of dTMP, an essential precursor for DNA biosynthesis. This chain is Thymidylate synthase, found in Escherichia coli (strain 55989 / EAEC).